Here is a 191-residue protein sequence, read N- to C-terminus: Imidazoleglycerol-phosphate dehydratase (191 aa).

It belongs to the imidazoleglycerol-phosphate dehydratase family.

It localises to the cytoplasm. The enzyme catalyses D-erythro-1-(imidazol-4-yl)glycerol 3-phosphate = 3-(imidazol-4-yl)-2-oxopropyl phosphate + H2O. It functions in the pathway amino-acid biosynthesis; L-histidine biosynthesis; L-histidine from 5-phospho-alpha-D-ribose 1-diphosphate: step 6/9. In Methanococcoides burtonii (strain DSM 6242 / NBRC 107633 / OCM 468 / ACE-M), this protein is Imidazoleglycerol-phosphate dehydratase.